The chain runs to 216 residues: MLPKNPIIGLCQQASFLISAAKVDQCPEDSGLEVAFAGRSNAGKSSALNTLTHASLARTSKTPGRTQLLNFFRLDDERRLVDLPGYGYAKVPIPLKQHWQKHLEAYLGSRESLCGLVLMMDIRHPLTEFDRMMLDWSVASGMPLHILLTKADKLAFGAAKNALLKVRQEIRKQWGEGISIQLFSAPKRMGVEEAQMVLAGWLDLLPQEDEESAEEA.

In terms of domain architecture, EngB-type G spans 30 to 204 (SGLEVAFAGR…QMVLAGWLDL (175 aa)). GTP is bound by residues 38 to 45 (GRSNAGKS), 64 to 68 (GRTQL), 82 to 85 (DLPG), 149 to 152 (TKAD), and 182 to 185 (LFSA). Positions 45 and 66 each coordinate Mg(2+).

This sequence belongs to the TRAFAC class TrmE-Era-EngA-EngB-Septin-like GTPase superfamily. EngB GTPase family. Mg(2+) serves as cofactor.

Its function is as follows. Necessary for normal cell division and for the maintenance of normal septation. The protein is Probable GTP-binding protein EngB of Ectopseudomonas mendocina (strain ymp) (Pseudomonas mendocina).